Consider the following 136-residue polypeptide: Peptide methionine sulfoxide reductase MsrB (136 aa).

Residues serine 7–aspartate 129 form the MsrB domain. Zn(2+) contacts are provided by cysteine 46, cysteine 49, cysteine 95, and cysteine 98. The active-site Nucleophile is the cysteine 118.

The protein belongs to the MsrB Met sulfoxide reductase family. The cofactor is Zn(2+).

The catalysed reaction is L-methionyl-[protein] + [thioredoxin]-disulfide + H2O = L-methionyl-(R)-S-oxide-[protein] + [thioredoxin]-dithiol. This is Peptide methionine sulfoxide reductase MsrB from Erwinia tasmaniensis (strain DSM 17950 / CFBP 7177 / CIP 109463 / NCPPB 4357 / Et1/99).